The sequence spans 81 residues: Styelin-E (81 aa).

Residues 1-22 (MQMKATILIVLVALFMIQQSEA) form the signal peptide. Trp24 carries the 6'-bromotryptophan modification. Arg26 is subject to 3,4-dihydroxyarginine. 4,5-dihydroxylysine occurs at positions 27, 30, and 34. 3',4'-dihydroxyphenylalanine occurs at positions 36 and 37. Lys38 carries the 4,5-dihydroxylysine modification. Lys40 carries the 5-hydroxylysine modification. Tyr41 and Tyr42 each carry 3',4'-dihydroxyphenylalanine. Lys44 is modified (5-hydroxylysine). Leu54 carries the post-translational modification Leucine amide. A propeptide spans 56-81 (DMTDEEFQDFMKEVEQAREEELQSRQ) (removed in mature form).

Contains L-DOPA (3',4'-dihydroxyphenylalanine). In terms of tissue distribution, hemocytes and pharyngeal tissues.

The protein localises to the secreted. Bactericidal against several Gram-positive and Gram-negative bacteria. In Styela clava (Sea squirt), this protein is Styelin-E.